The chain runs to 317 residues: MALQGWRFFGVSATIIIYIGGVLFLSMNNIPGSHPKRPRIERFAEFPSFHSPRFPMPSRKMTIRWCRDLKYINRDLPIYADYKSDFYTALPSDVSAALQSLPALTALASFPGSGNTWLRYLLQQATGILTGSIYKDYGLLKTGFPAENVCNSSVLLVKTHEWGSKAWAPFSKAILLVRDPEKAIIAEFNRQSGGHIGFASPDRYKRTKGKYWQQFVSNKLKGWEMMNLSWARNFTGSIKVVFYDDLVHHTERELRSILDFLQFPINEQLMRCAIMRKEGIFRRKKRLLSFDPYTESMRAEVQNRRRIVYGLLGRQEP.

The helical transmembrane segment at 8-28 threads the bilayer; that stretch reads FFGVSATIIIYIGGVLFLSMN. Residues asparagine 151, asparagine 227, and asparagine 233 are each glycosylated (N-linked (GlcNAc...) asparagine).

The protein belongs to the WSCD family.

The protein localises to the membrane. The protein is WSCD family member CG9164 of Drosophila melanogaster (Fruit fly).